Reading from the N-terminus, the 503-residue chain is Aminoaldehyde dehydrogenase 1, peroxisomal (503 aa).

N27, I28, D99, and L189 together coordinate Na(+). Position 238–245 (238–245 (GSSATGSK)) interacts with NAD(+). The Proton acceptor role is filled by E260. 2 residues coordinate NAD(+): C294 and E393. The active-site Nucleophile is C294. The short motif at 501–503 (SKL) is the Microbody targeting signal element.

Belongs to the aldehyde dehydrogenase family. In terms of assembly, forms homodimers.

The protein localises to the peroxisome. It carries out the reaction 3-aminopropanal + NAD(+) + H2O = beta-alanine + NADH + 2 H(+). The catalysed reaction is 4-aminobutanal + NAD(+) + H2O = 4-aminobutanoate + NADH + 2 H(+). It catalyses the reaction 4-guanidinobutanal + NAD(+) + H2O = 4-guanidinobutanoate + NADH + 2 H(+). It participates in amine and polyamine biosynthesis; betaine biosynthesis via choline pathway; betaine from betaine aldehyde: step 1/1. Dehydrogenase that catalyzes the oxidation of several aminoaldehydes. Metabolizes and detoxifies aldehyde products of polyamine degradation to non-toxic amino acids. Catalyzes the oxidation of 3-aminopropanal to beta-alanine. Catalyzes the oxidation of 4-aminobutanal to 4-aminobutanoate. Catalyzes the oxidation of 4-guanidinobutanal to 4-guanidinobutanoate. The polypeptide is Aminoaldehyde dehydrogenase 1, peroxisomal (Pisum sativum (Garden pea)).